We begin with the raw amino-acid sequence, 151 residues long: 4-hydroxybenzoyl-CoA thioesterase (151 aa).

The active site involves Glu-73. 100–102 (FFR) lines the substrate pocket.

It belongs to the thioesterase PaaI family. Homotetramer.

It catalyses the reaction 4-hydroxybenzoyl-CoA + H2O = 4-hydroxybenzoate + CoA + H(+). It functions in the pathway xenobiotic degradation; 4-chlorobenzoate degradation; 4-hydroxybenzoate from 4-chlorobenzoate: step 3/3. The polypeptide is 4-hydroxybenzoyl-CoA thioesterase (Arthrobacter globiformis).